We begin with the raw amino-acid sequence, 117 residues long: Cuticular protein 47Eg (117 aa).

Positions 1-16 (MKFFIAFACLLAVALA) are cleaved as a signal peptide. The region spanning 31 to 97 (VDGFAYAVEL…SANPPLPTPP (67 aa)) is the Chitin-binding type R&amp;R domain.

Functionally, component of the larval cuticle. In Drosophila melanogaster (Fruit fly), this protein is Cuticular protein 47Eg (Cpr47Eg).